Here is an 864-residue protein sequence, read N- to C-terminus: Leucine--tRNA ligase (864 aa).

The short motif at 42-52 is the 'HIGH' region element; that stretch reads PYPSGRLHMGH. Residues 621 to 625 carry the 'KMSKS' region motif; it reads KMSKS. K624 serves as a coordination point for ATP.

The protein belongs to the class-I aminoacyl-tRNA synthetase family.

The protein localises to the cytoplasm. The catalysed reaction is tRNA(Leu) + L-leucine + ATP = L-leucyl-tRNA(Leu) + AMP + diphosphate. This Alkalilimnicola ehrlichii (strain ATCC BAA-1101 / DSM 17681 / MLHE-1) protein is Leucine--tRNA ligase.